The following is a 392-amino-acid chain: Stilbene synthase 3 (392 aa).

A substrate-binding site is contributed by 55–58; sequence KFNR. C164 is an active-site residue. Substrate-binding positions include L267 and 305–307; that span reads GGP.

It belongs to the thiolase-like superfamily. Chalcone/stilbene synthases family. Homodimer.

The protein resides in the cytoplasm. The catalysed reaction is 4-coumaroyl-CoA + 3 malonyl-CoA + 3 H(+) = trans-resveratrol + 4 CO2 + 4 CoA. It functions in the pathway phytoalexin biosynthesis; 3,4',5-trihydroxystilbene biosynthesis; 3,4',5-trihydroxystilbene from trans-4-coumarate: step 2/2. Its function is as follows. Mediates resistance to pathogens which are sensitive to stilbenes. The sequence is that of Stilbene synthase 3 from Vitis vinifera (Grape).